Reading from the N-terminus, the 327-residue chain is Probable cell division protein WhiA (327 aa).

A DNA-binding region (H-T-H motif) is located at residues 275 to 308 (SLEELGRLADPPMTKDAVAGRIRRLLSMADRKAK). The tract at residues 304–327 (DRKAKQDGIPDTESAVTPDLLEDA) is disordered.

It belongs to the WhiA family.

Its function is as follows. Involved in cell division and chromosome segregation. This chain is Probable cell division protein WhiA, found in Mycolicibacterium gilvum (strain PYR-GCK) (Mycobacterium gilvum (strain PYR-GCK)).